Reading from the N-terminus, the 187-residue chain is ATP synthase subunit b (187 aa).

The chain crosses the membrane as a helical span at residues 31-51 (VAIMGLAIFVLFLILSYLLFN).

The protein belongs to the ATPase B chain family. As to quaternary structure, F-type ATPases have 2 components, F(1) - the catalytic core - and F(0) - the membrane proton channel. F(1) has five subunits: alpha(3), beta(3), gamma(1), delta(1), epsilon(1). F(0) has three main subunits: a(1), b(2) and c(10-14). The alpha and beta chains form an alternating ring which encloses part of the gamma chain. F(1) is attached to F(0) by a central stalk formed by the gamma and epsilon chains, while a peripheral stalk is formed by the delta and b chains.

It localises to the cell membrane. In terms of biological role, f(1)F(0) ATP synthase produces ATP from ADP in the presence of a proton or sodium gradient. F-type ATPases consist of two structural domains, F(1) containing the extramembraneous catalytic core and F(0) containing the membrane proton channel, linked together by a central stalk and a peripheral stalk. During catalysis, ATP synthesis in the catalytic domain of F(1) is coupled via a rotary mechanism of the central stalk subunits to proton translocation. Component of the F(0) channel, it forms part of the peripheral stalk, linking F(1) to F(0). The polypeptide is ATP synthase subunit b (Lachnoclostridium phytofermentans (strain ATCC 700394 / DSM 18823 / ISDg) (Clostridium phytofermentans)).